A 417-amino-acid chain; its full sequence is MDVKAYMQKLGQQAREASRQLMVATTRQKNTALLNIATALEEQAETLKTENAKDLEQGKANGLDAAMLDRLALTDKVINGMATGLRQIAALNDPIGEISDMNYLPSGIQVGKMRVPLGVVGIIYESRPNVTIDAAALCLKSGNAALLRGGSEAAYSNRALAKCIQSALHESGLLPTAVQVVETTDRAAVGEMIAMPEYVDVIIPRGGKGLIERISEGAKVPVIKHLDGICHVYIDDDADADKATRVAFNAKTHRYGVCNAMETLLIADSRAAEILPGLVELYEEKGVELRGCEQTRAICDMKAATEEDWATEYLAPILSIKVVDDVDEAIDHITQYSSGHTESIITENLTTSRQFLARVDSSSVMVNASTRFADGFEYGLGAEIGISTDKFHARGPVGLEGLTSQKYIVLGDGTIRE.

It belongs to the gamma-glutamyl phosphate reductase family.

Its subcellular location is the cytoplasm. The catalysed reaction is L-glutamate 5-semialdehyde + phosphate + NADP(+) = L-glutamyl 5-phosphate + NADPH + H(+). It participates in amino-acid biosynthesis; L-proline biosynthesis; L-glutamate 5-semialdehyde from L-glutamate: step 2/2. Catalyzes the NADPH-dependent reduction of L-glutamate 5-phosphate into L-glutamate 5-semialdehyde and phosphate. The product spontaneously undergoes cyclization to form 1-pyrroline-5-carboxylate. The protein is Gamma-glutamyl phosphate reductase of Hydrogenovibrio crunogenus (strain DSM 25203 / XCL-2) (Thiomicrospira crunogena).